A 148-amino-acid polypeptide reads, in one-letter code: Urease accessory protein UreE (148 aa).

It belongs to the UreE family.

It is found in the cytoplasm. In terms of biological role, involved in urease metallocenter assembly. Binds nickel. Probably functions as a nickel donor during metallocenter assembly. This Aliarcobacter butzleri (strain RM4018) (Arcobacter butzleri) protein is Urease accessory protein UreE.